The following is a 442-amino-acid chain: D-serine dehydratase (442 aa).

Residue K118 is modified to N6-(pyridoxal phosphate)lysine.

Belongs to the serine/threonine dehydratase family. DsdA subfamily. Monomer. Requires pyridoxal 5'-phosphate as cofactor.

It carries out the reaction D-serine = pyruvate + NH4(+). The chain is D-serine dehydratase from Escherichia coli (strain 55989 / EAEC).